A 542-amino-acid chain; its full sequence is Excitatory amino acid transporter 1 (542 aa).

Topologically, residues 1–47 (MTKSNGEEARLGGRMERFQQGVRKRTLLAKKKVQNITKEDVKSYLFR) are cytoplasmic. The chain crosses the membrane as a helical span at residues 48–68 (NAFVLLTVTAVIVGTILGFTL). Residues 69–86 (RPYRMSYREVKYFSFPGE) lie on the Extracellular side of the membrane. Residues 87 to 108 (LLMRMLQMLVLPLIISSLVTGM) form a helical membrane-spanning segment. Over 109–122 (AALDSKASGKMGMR) the chain is Cytoplasmic. A helical membrane pass occupies residues 123–145 (AVVYYMTTTIIAVVIGIIIVIII). The Extracellular portion of the chain corresponds to 146-236 (HPGKGTKENM…ITEELVPVPG (91 aa)). A helical membrane pass occupies residues 237–260 (SVNGVNALGLVVFSMCFGFVIGNM). Residues 261-269 (KEQGQALRE) lie on the Cytoplasmic side of the membrane. A helical transmembrane segment spans residues 270 to 297 (FFDSLNEAIMRLVAVIMWYAPLGILFLI). The Extracellular segment spans residues 298–318 (AGKIVEMEDMGVIGGQLAMYT). A helical transmembrane segment spans residues 319–340 (VTVIVGLLIHAVIVLPLLYFLV). Over 341–345 (TRKNP) the chain is Cytoplasmic. Residues 346 to 376 (WVFIGGLLQALITALGTSSSSATLPITFKCL) constitute an intramembrane region (discontinuously helical). Residue 363–365 (SSS) participates in L-aspartate binding. The Cytoplasmic segment spans residues 377 to 385 (EENNGVDKR). A helical membrane pass occupies residues 386 to 412 (VTRFVLPVGATINMDGTALYEALAAIF). 3 residues coordinate Na(+): Gly-394, Thr-396, and Asn-398. Thr-402 serves as a coordination point for L-aspartate. Residues 413–425 (IAQVNNFELNFGQ) are Extracellular-facing. Residues 426-459 (IITISITATAASIGAAGIPQAGLVTMVIVLTSVG) constitute an intramembrane region (discontinuously helical). 443 to 447 (IPQAG) provides a ligand contact to L-aspartate. The Extracellular portion of the chain corresponds to 460–472 (LPTDDITLIIAVD). A helical transmembrane segment spans residues 473 to 494 (WFLDRLRTTTNVLGDSLGAGIV). The L-aspartate site is built by Asp-476 and Asn-483. Residues Asn-483 and Asp-487 each contribute to the Na(+) site. Residues 495 to 542 (EHLSRHELKNRDVEMGNSVIEENEMKKPYQLISQESEIEKSMDSETKM) lie on the Cytoplasmic side of the membrane. Ser-512 is subject to Phosphoserine.

This sequence belongs to the dicarboxylate/amino acid:cation symporter (DAACS) (TC 2.A.23) family. SLC1A3 subfamily. Homotrimer. Glycosylated.

It localises to the cell membrane. The catalysed reaction is K(+)(in) + L-glutamate(out) + 3 Na(+)(out) + H(+)(out) = K(+)(out) + L-glutamate(in) + 3 Na(+)(in) + H(+)(in). It catalyses the reaction K(+)(in) + L-aspartate(out) + 3 Na(+)(out) + H(+)(out) = K(+)(out) + L-aspartate(in) + 3 Na(+)(in) + H(+)(in). The enzyme catalyses D-aspartate(out) + K(+)(in) + 3 Na(+)(out) + H(+)(out) = D-aspartate(in) + K(+)(out) + 3 Na(+)(in) + H(+)(in). Its function is as follows. Sodium-dependent, high-affinity amino acid transporter that mediates the uptake of L-glutamate and also L-aspartate and D-aspartate. Functions as a symporter that transports one amino acid molecule together with two or three Na(+) ions and one proton, in parallel with the counter-transport of one K(+) ion. Plays a redundant role in the rapid removal of released glutamate from the synaptic cleft, which is essential for terminating the postsynaptic action of glutamate. The chain is Excitatory amino acid transporter 1 (SLC1A3) from Bos taurus (Bovine).